The sequence spans 269 residues: 2-dehydro-3-deoxyphosphooctonate aldolase (269 aa).

The protein belongs to the KdsA family.

It is found in the cytoplasm. The enzyme catalyses D-arabinose 5-phosphate + phosphoenolpyruvate + H2O = 3-deoxy-alpha-D-manno-2-octulosonate-8-phosphate + phosphate. The protein operates within carbohydrate biosynthesis; 3-deoxy-D-manno-octulosonate biosynthesis; 3-deoxy-D-manno-octulosonate from D-ribulose 5-phosphate: step 2/3. It participates in bacterial outer membrane biogenesis; lipopolysaccharide biosynthesis. The protein is 2-dehydro-3-deoxyphosphooctonate aldolase of Chlamydia trachomatis serovar A (strain ATCC VR-571B / DSM 19440 / HAR-13).